A 596-amino-acid chain; its full sequence is Elongation factor 4 (596 aa).

The region spanning 2–184 is the tr-type G domain; the sequence is KHIRNFSIIA…EIIAKIPPPV (183 aa). Residues 14 to 19 and 131 to 134 contribute to the GTP site; these read DHGKST and NKID.

Belongs to the TRAFAC class translation factor GTPase superfamily. Classic translation factor GTPase family. LepA subfamily.

The protein resides in the cell inner membrane. It catalyses the reaction GTP + H2O = GDP + phosphate + H(+). Its function is as follows. Required for accurate and efficient protein synthesis under certain stress conditions. May act as a fidelity factor of the translation reaction, by catalyzing a one-codon backward translocation of tRNAs on improperly translocated ribosomes. Back-translocation proceeds from a post-translocation (POST) complex to a pre-translocation (PRE) complex, thus giving elongation factor G a second chance to translocate the tRNAs correctly. Binds to ribosomes in a GTP-dependent manner. The sequence is that of Elongation factor 4 from Shewanella frigidimarina (strain NCIMB 400).